A 382-amino-acid chain; its full sequence is Mannitol-1-phosphate 5-dehydrogenase (382 aa).

Position 3 to 14 (3 to 14) interacts with NAD(+); sequence ALHFGAGNIGRG.

It belongs to the mannitol dehydrogenase family.

The catalysed reaction is D-mannitol 1-phosphate + NAD(+) = beta-D-fructose 6-phosphate + NADH + H(+). The protein is Mannitol-1-phosphate 5-dehydrogenase of Salmonella schwarzengrund (strain CVM19633).